Consider the following 307-residue polypeptide: Cyclooctat-9-en-7-ol synthase (307 aa).

Residues Asp110, Asn220, Ser224, and Glu228 each contribute to the Mg(2+) site. The DDXXD motif; degenerate signature appears at 110–113 (DDMD). An NSE/DTE motif motif is present at residues 220-228 (NDFYSYDRE).

The protein belongs to the terpene synthase family. In terms of assembly, homodimer. It depends on Mg(2+) as a cofactor.

It catalyses the reaction geranylgeranyl diphosphate + H2O = cyclooctat-9-en-7-ol + diphosphate. In terms of biological role, catalyzes the cyclization of the linear isoprenoid intermediate geranylgeranyl diphosphate to tricycclic cyclooctat-9-en-7-ol in the cyclooctatin biosynthesis pathway. Cyclooctatin is a potent inhibitor of lysophospholipase. This is Cyclooctat-9-en-7-ol synthase from Streptomyces melanosporofaciens.